A 659-amino-acid chain; its full sequence is Putative cysteine-rich receptor-like protein kinase 39 (659 aa).

The first 27 residues, 1–27 (MGKYSVLMIFIASSLLIVLQNVEIVNA), serve as a signal peptide directing secretion. Gnk2-homologous domains follow at residues 28-134 (VGCT…NHST) and 142-253 (PSVR…LYAF). Residues 28–289 (VGCTGSFFNG…KKKGRSIGYG (262 aa)) are Extracellular-facing. N-linked (GlcNAc...) asparagine glycans are attached at residues N38, N64, N122, N131, N157, N170, N259, and N274. A helical transmembrane segment spans residues 290-310 (GIIAIVVVLTFINILVFIGYI). Over 311–659 (KVYGRRKESY…DDVFTELSCR (349 aa)) the chain is Cytoplasmic. Residues 353–619 (FSSENTLGQG…PTMSSVIIWL (267 aa)) enclose the Protein kinase domain. Residues 359–367 (LGQGGFGTV) and K381 each bind ATP. Residue Y426 is modified to Phosphotyrosine. D478 serves as the catalytic Proton acceptor. A Phosphoserine modification is found at S482. T518 carries the post-translational modification Phosphothreonine. Y526 is subject to Phosphotyrosine.

This sequence belongs to the protein kinase superfamily. Ser/Thr protein kinase family. CRK subfamily.

It is found in the membrane. It carries out the reaction L-seryl-[protein] + ATP = O-phospho-L-seryl-[protein] + ADP + H(+). It catalyses the reaction L-threonyl-[protein] + ATP = O-phospho-L-threonyl-[protein] + ADP + H(+). The sequence is that of Putative cysteine-rich receptor-like protein kinase 39 (CRK39) from Arabidopsis thaliana (Mouse-ear cress).